Here is a 226-residue protein sequence, read N- to C-terminus: UPF0758 protein SPD_0975 (226 aa).

Residues 103–225 (SILSSQKLAK…YFSYREKTDL (123 aa)) form the MPN domain. Zn(2+) contacts are provided by His174, His176, and Asp187. Positions 174 to 187 (HNHPSGAVAPSQND) match the JAMM motif motif.

This sequence belongs to the UPF0758 family.

In Streptococcus pneumoniae serotype 2 (strain D39 / NCTC 7466), this protein is UPF0758 protein SPD_0975.